The following is a 402-amino-acid chain: Heat stress transcription factor A-6a (402 aa).

The segment at 1-28 (MLKPQTPRARRAAHPNSHMASSSSSSSL) is disordered. Residues 212 to 258 (EVVSLKRDRAALRAEVIMLKQQYNACKSQLIAMEEMVRNIERRQQQT) adopt a coiled-coil conformation. Positions 216 to 266 (LKRDRAALRAEVIMLKQQYNACKSQLIAMEEMVRNIERRQQQTIGFFAKVL) are hydrophobic repeat HR-A/B. The Nuclear localization signal signature appears at 290–293 (KRQR). The short motif at 349–358 (DDVWEELDAL) is the AHA element.

This sequence belongs to the HSF family. Class A subfamily. As to quaternary structure, homotrimer. Post-translationally, exhibits temperature-dependent phosphorylation.

The protein localises to the nucleus. Functionally, transcriptional regulator that specifically binds DNA of heat shock promoter elements (HSE). In Oryza sativa subsp. japonica (Rice), this protein is Heat stress transcription factor A-6a (HSFA6B).